Consider the following 289-residue polypeptide: Serine/threonine-protein phosphatase Pgam5, mitochondrial (289 aa).

The helical transmembrane segment at 7 to 23 (FACGTGAGLLTFYLTKL) threads the bilayer.

This sequence belongs to the phosphoglycerate mutase family. BPG-dependent PGAM subfamily. Interacts with Pk92B/ASK1.

It is found in the mitochondrion outer membrane. The enzyme catalyses O-phospho-L-seryl-[protein] + H2O = L-seryl-[protein] + phosphate. It carries out the reaction O-phospho-L-threonyl-[protein] + H2O = L-threonyl-[protein] + phosphate. Its function is as follows. Displays phosphatase activity for serine/threonine residues, and dephosphorylates and activates Pk92B kinase. Has apparently no phosphoglycerate mutase activity. The polypeptide is Serine/threonine-protein phosphatase Pgam5, mitochondrial (Drosophila persimilis (Fruit fly)).